We begin with the raw amino-acid sequence, 466 residues long: DNA polymerase delta subunit 3 (466 aa).

Residue Ala-2 is modified to N-acetylalanine. Disordered stretches follow at residues 145–218 and 255–466; these read PAES…KEVM and EQEV…FQRK. Composition is skewed to basic and acidic residues over residues 205 to 218, 255 to 265, and 281 to 297; these read DANK…KEVM, EQEVKEEKKVE, and DLKK…MQQK. Lys-259 participates in a covalent cross-link: Glycyl lysine isopeptide (Lys-Gly) (interchain with G-Cter in SUMO); alternate. Lys-259 participates in a covalent cross-link: Glycyl lysine isopeptide (Lys-Gly) (interchain with G-Cter in SUMO2); alternate. Lys-262 participates in a covalent cross-link: Glycyl lysine isopeptide (Lys-Gly) (interchain with G-Cter in SUMO2). At Ser-308 the chain carries Phosphoserine. Residues 350–360 are compositionally biased toward pro residues; sequence PSPPPPSPSPE. A phosphoserine mark is found at Ser-407 and Ser-409. Thr-411 is modified (phosphothreonine). Residue Ser-413 is modified to Phosphoserine. Residues 432 to 441 show a composition bias toward basic and acidic residues; the sequence is VKKEPKEERK. Residue Lys-433 forms a Glycyl lysine isopeptide (Lys-Gly) (interchain with G-Cter in SUMO); alternate linkage. Residue Lys-433 forms a Glycyl lysine isopeptide (Lys-Gly) (interchain with G-Cter in SUMO2); alternate linkage. The short motif at 456–463 is the PIP-box element; sequence QVAITGFF.

In terms of assembly, component of both the DNA polymerase delta and DNA polymerase zeta complexes. The tetrameric DNA polymerase delta complex (Pol-delta4), which consists of POLD1/p125, POLD2/p50, POLD3/p66/p68 and POLD4/p12, with POLD1 bearing DNA polymerase and 3' to 5' proofreading exonuclease activities. Within this complex, directly interacts with POLD2. Following stress caused by DNA damaging agents or by replication stress, POLD4 is degraded and Pol-delta4 is converted into a trimeric form of the complex (Pol-delta3), which consists of POLD1, POLD2 and POLD3. Pol-delta3 is the major form occurring at S phase replication sites, as well as DNA damage sites. Directly interacts with PCNA, as do POLD1 and POLD4; this interaction stimulates Pol-delta polymerase activity. Component of the DNA polymerase zeta complex (POLZ), which consists of REV3L, MAD2L2, POLD2 and POLD3, with REV3L bearing DNA polymerase catalytic activity. The DNA polymerase delta complex interacts with POLDIP2; this interaction is probably mediated through direct binding to POLD2. Post-translationally, ubiquitinated, but not targeted to the proteasome. Sumoylated. Sumoylation by SUMO3 may be predominant.

It is found in the cytoplasm. The protein localises to the nucleus. Its function is as follows. Accessory component of both the DNA polymerase delta complex and the DNA polymerase zeta complex. As a component of the trimeric and tetrameric DNA polymerase delta complexes (Pol-delta3 and Pol-delta4, respectively), plays a role in high fidelity genome replication, including in lagging strand synthesis, and repair. Required for optimal Pol-delta activity. Stabilizes the Pol-delta complex and plays a major role in Pol-delta stimulation by PCNA. Pol-delta3 and Pol-delta4 are characterized by the absence or the presence of POLD4. They exhibit differences in catalytic activity. Most notably, Pol-delta3 shows higher proofreading activity than Pol-delta4. Although both Pol-delta3 and Pol-delta4 process Okazaki fragments in vitro, Pol-delta3 may also be better suited to fulfill this task, exhibiting near-absence of strand displacement activity compared to Pol-delta4 and stalling on encounter with the 5'-blocking oligonucleotides. Pol-delta3 idling process may avoid the formation of a gap, while maintaining a nick that can be readily ligated. Along with DNA polymerase kappa, DNA polymerase delta carries out approximately half of nucleotide excision repair (NER) synthesis following UV irradiation. In this context, POLD3, along with PCNA and RFC1-replication factor C complex, is required to recruit POLD1, the catalytic subunit of the polymerase delta complex, to DNA damage sites. Under conditions of DNA replication stress, required for the repair of broken replication forks through break-induced replication (BIR). Involved in the translesion synthesis (TLS) of templates carrying O6-methylguanine or abasic sites performed by Pol-delta4, independently of DNA polymerase zeta (REV3L) or eta (POLH). Facilitates abasic site bypass by DNA polymerase delta by promoting extension from the nucleotide inserted opposite the lesion. Also involved in TLS, as a component of the tetrameric DNA polymerase zeta complex. Along with POLD2, dramatically increases the efficiency and processivity of DNA synthesis of the DNA polymerase zeta complex compared to the minimal zeta complex, consisting of only REV3L and REV7. This Bos taurus (Bovine) protein is DNA polymerase delta subunit 3 (POLD3).